We begin with the raw amino-acid sequence, 287 residues long: Nucleotide-binding protein mma_3120 (287 aa).

ATP is bound at residue 8–15 (GISGSGKS). Residue 57 to 60 (DARS) participates in GTP binding.

This sequence belongs to the RapZ-like family.

In terms of biological role, displays ATPase and GTPase activities. The chain is Nucleotide-binding protein mma_3120 from Janthinobacterium sp. (strain Marseille) (Minibacterium massiliensis).